A 434-amino-acid polypeptide reads, in one-letter code: Glutamate-1-semialdehyde 2,1-aminomutase 2 (434 aa).

K269 is subject to N6-(pyridoxal phosphate)lysine.

This sequence belongs to the class-III pyridoxal-phosphate-dependent aminotransferase family. HemL subfamily. As to quaternary structure, homodimer. It depends on pyridoxal 5'-phosphate as a cofactor.

It is found in the cytoplasm. It carries out the reaction (S)-4-amino-5-oxopentanoate = 5-aminolevulinate. Its pathway is porphyrin-containing compound metabolism; protoporphyrin-IX biosynthesis; 5-aminolevulinate from L-glutamyl-tRNA(Glu): step 2/2. This chain is Glutamate-1-semialdehyde 2,1-aminomutase 2, found in Exiguobacterium sp. (strain ATCC BAA-1283 / AT1b).